We begin with the raw amino-acid sequence, 244 residues long: Probable transcriptional regulatory protein CBU_1566 (244 aa).

It belongs to the TACO1 family.

Its subcellular location is the cytoplasm. This is Probable transcriptional regulatory protein CBU_1566 from Coxiella burnetii (strain RSA 493 / Nine Mile phase I).